Here is a 178-residue protein sequence, read N- to C-terminus: Large ribosomal subunit protein uL6 (178 aa).

This sequence belongs to the universal ribosomal protein uL6 family. In terms of assembly, part of the 50S ribosomal subunit.

Functionally, this protein binds to the 23S rRNA, and is important in its secondary structure. It is located near the subunit interface in the base of the L7/L12 stalk, and near the tRNA binding site of the peptidyltransferase center. The protein is Large ribosomal subunit protein uL6 of Lactococcus lactis subsp. lactis (strain IL1403) (Streptococcus lactis).